The sequence spans 365 residues: MNMDTSKVILIVAIIIWIILYSIRDSINLKTYGGIFGILRTKLGLKTIEKLGKYKIWQKIGIISIPICVILGFFMLLNIIDMSIRLLSGTLPKEAAKPVVFLFGDVIPWIPGIIALLIAISVHELAHGIFAKSFGIKVKSSGILLLLGLPLGAFVELGDEFKTADKKIRGAIASAGPLANLIIFLTSIPLLSFSYTLPTELKIIDVKEPASEFLQKGDIIYEINGKKINSLEDFKEFAKTIEPKKEYEIKILRDNKILTYKIVSSNEGKLGIMVSPTKNTALFINTIYWTYWFNFLLALFNLLPAMPLDGFHVWNAFPELLKERKNRFISKVGQILELFINEKTLGSITLLVWWVILGSILYSMW.

The next 6 helical transmembrane spans lie at 3 to 23 (MDTS…LYSI), 60 to 80 (IGII…LNII), 100 to 120 (VFLF…LIAI), 141 to 161 (SGIL…GDEF), 171 to 191 (AIAS…IPLL), and 280 to 300 (TALF…LALF).

To S.solfataricus C04034.

Its subcellular location is the cell membrane. This is an uncharacterized protein from Methanocaldococcus jannaschii (strain ATCC 43067 / DSM 2661 / JAL-1 / JCM 10045 / NBRC 100440) (Methanococcus jannaschii).